Consider the following 718-residue polypeptide: Tensin-4 (718 aa).

Residues 1–14 (MSSSLLTGGHVVSL) form the signal peptide. Disordered regions lie at residues 188-244 (RETR…GLRA) and 272-437 (LPHS…AKDM). The span at 192–207 (SSSNESLIFSGNQGRG) shows a compositional bias: polar residues. Low complexity predominate over residues 208-219 (SSPHTPSSLSNS). Ser-230 carries the post-translational modification Phosphoserine. A compositionally biased stretch (low complexity) spans 272-304 (LPHSSLSSYPPSSRSLGSPASSSSSLHSLDRGS). Composition is skewed to polar residues over residues 306-316 (CVRSSDAQVPS), 337-349 (QASS…TNSM), 367-393 (PAQQ…QATK), and 405-415 (TSPSHLCQATK). Residues 451 to 558 (WFKPSITREQ…ALPCKLTIPQ (108 aa)) enclose the SH2 domain. The 127-residue stretch at 585-711 (CHTLYLTSVS…SQVISLVTAL (127 aa)) folds into the PTB domain.

Belongs to the PTEN phosphatase protein family. Interacts (via SH2 domain) with Rho GTPase-activating protein DLC1 (via C-terminus); the interaction is independent of DLC1 tyrosine phosphorylation. Interacts with integrin ITGB1; the interaction displaces tensin TNS3 from the ITGB1 cytoplasmic tail and promotes ITGB1 stability. Interacts (via SH2 domain) with E3 ubiquitin-protein ligase CBL (phosphorylated on 'Tyr-781'); the interaction is enhanced in the presence of EGF and reduces interaction of CBL with EGFR. Interacts (via SH2 domain) with receptor tyrosine kinase MET (when phosphorylated); the interaction increases MET protein stability.

It is found in the cell junction. It localises to the focal adhesion. The protein resides in the cytoplasm. The protein localises to the cytoskeleton. Promotes EGF-induced cell migration by displacing tensin TNS3 from the cytoplasmic tail of integrin ITGB1 which results in dissociation of TNS3 from focal adhesions, disassembly of actin stress fibers and initiation of cell migration. Suppresses ligand-induced degradation of EGFR by reducing EGFR ubiquitination in the presence of EGF. Increases MET protein stability by inhibiting MET endocytosis and subsequent lysosomal degradation which leads to increased cell survival, proliferation and migration. In Rattus norvegicus (Rat), this protein is Tensin-4 (Tns4).